The chain runs to 294 residues: tRNA dimethylallyltransferase (294 aa).

11 to 18 (GPTAVGKT) is a binding site for ATP. Residue 13-18 (TAVGKT) participates in substrate binding. The tract at residues 36-39 (DSQQ) is interaction with substrate tRNA.

Belongs to the IPP transferase family. In terms of assembly, monomer. Mg(2+) is required as a cofactor.

The catalysed reaction is adenosine(37) in tRNA + dimethylallyl diphosphate = N(6)-dimethylallyladenosine(37) in tRNA + diphosphate. Functionally, catalyzes the transfer of a dimethylallyl group onto the adenine at position 37 in tRNAs that read codons beginning with uridine, leading to the formation of N6-(dimethylallyl)adenosine (i(6)A). The sequence is that of tRNA dimethylallyltransferase from Lactococcus lactis subsp. lactis (strain IL1403) (Streptococcus lactis).